A 181-amino-acid chain; its full sequence is Nedd8-conjugating enzyme UbcE2M (181 aa).

2 interaction with Uba3 regions span residues 4–7 (LFTL) and 24–54 (ASAA…PNDL). The 145-residue stretch at 26 to 170 (AAQLRIQKDI…VKKAMRGGCV (145 aa)) folds into the UBC core domain. Cys-108 acts as the Glycyl thioester intermediate in catalysis.

This sequence belongs to the ubiquitin-conjugating enzyme family. UBC12 subfamily. In terms of assembly, interacts with Uba3. In terms of tissue distribution, expressed in the wing disk.

It catalyses the reaction [E1 NEDD8-activating enzyme]-S-[NEDD8 protein]-yl-L-cysteine + [E2 NEDD8-conjugating enzyme]-L-cysteine = [E1 NEDD8-activating enzyme]-L-cysteine + [E2 NEDD8-conjugating enzyme]-S-[NEDD8-protein]-yl-L-cysteine.. It participates in protein modification; protein neddylation. Its function is as follows. Accepts the ubiquitin-like protein Nedd8 from the Uba3-APP-BP1 E1 complex and catalyzes its covalent attachment to other proteins. Required for Cul1 and Cul3 neddylation. Negatively regulates full-length ci stability and hedgehog signaling. This Drosophila melanogaster (Fruit fly) protein is Nedd8-conjugating enzyme UbcE2M.